The following is a 159-amino-acid chain: Small ribosomal subunit protein uS7 (159 aa).

Belongs to the universal ribosomal protein uS7 family. As to quaternary structure, part of the 30S ribosomal subunit. Contacts proteins S9 and S11.

One of the primary rRNA binding proteins, it binds directly to 16S rRNA where it nucleates assembly of the head domain of the 30S subunit. Is located at the subunit interface close to the decoding center, probably blocks exit of the E-site tRNA. This Sulfurihydrogenibium sp. (strain YO3AOP1) protein is Small ribosomal subunit protein uS7.